Here is a 686-residue protein sequence, read N- to C-terminus: ATP-dependent zinc metalloprotease FtsH 1 (686 aa).

Over 1 to 33 (MCFCIVSSPEAMHSNADSPSSGPGLQPVWTTLR) the chain is Cytoplasmic. A helical membrane pass occupies residues 34–54 (SPYVFWIGGAILLALLVHLGI). Residues 55–164 (KWQQASAPVR…TFAATQESDW (110 aa)) lie on the Periplasmic side of the membrane. The chain crosses the membrane as a helical span at residues 165 to 185 (VGTLLLWGLPLGLIVGIWLFF). Topologically, residues 186-686 (MRRMATGGRE…AEGASPSSQG (501 aa)) are cytoplasmic. Residue 257 to 264 (GPPGTGKT) participates in ATP binding. Residue His-479 coordinates Zn(2+). Glu-480 is an active-site residue. 2 residues coordinate Zn(2+): His-483 and Asp-555. The disordered stretch occupies residues 661-686 (YAWLKEGDGTSRNSASAEGASPSSQG). Polar residues predominate over residues 670-686 (TSRNSASAEGASPSSQG).

It in the central section; belongs to the AAA ATPase family. In the C-terminal section; belongs to the peptidase M41 family. In terms of assembly, homohexamer. The cofactor is Zn(2+).

Its subcellular location is the cell inner membrane. Its function is as follows. Acts as a processive, ATP-dependent zinc metallopeptidase for both cytoplasmic and membrane proteins. Plays a role in the quality control of integral membrane proteins. This Salinibacter ruber (strain M8) protein is ATP-dependent zinc metalloprotease FtsH 1.